Reading from the N-terminus, the 157-residue chain is V-type proton ATPase 16 kDa proteolipid subunit c (157 aa).

The Lumenal segment spans residues 1–10 (MALPEENPVY). The helical transmembrane segment at 11-33 (GPFFGVMGAAAAIIFSALGAAYG) threads the bilayer. The Cytoplasmic portion of the chain corresponds to 34-55 (TAKSGTGIAAMSVMRPELIMKS). Residues 56–76 (IIPVVMAGIIAIYGLVVAVLI) form a helical membrane-spanning segment. At 77-94 (AGSLDTPTKYSLYKGFIH) the chain is on the lumenal side. Residues 95–116 (LGAGLAVGFSGLAAGFAIGIVG) traverse the membrane as a helical segment. The Cytoplasmic segment spans residues 117–128 (DAGVRGTAQQPR). Residues 129–154 (LFVGMILILIFAEVLGLYGLIVAIYL) traverse the membrane as a helical segment. At 155–157 (YTK) the chain is on the lumenal side.

Belongs to the V-ATPase proteolipid subunit family. In terms of assembly, V-ATPase is a heteromultimeric enzyme made up of two complexes: the ATP-hydrolytic V1 complex and the proton translocation V0 complex. The V1 complex consists of three catalytic AB heterodimers that form a heterohexamer, three peripheral stalks each consisting of EG heterodimers, one central rotor including subunits D and F, and the regulatory subunits C and H. The proton translocation complex V0 consists of the proton transport subunit a, a ring of proteolipid subunits c9c'', rotary subunit d, subunits e and f, and the accessory subunits VhaAC45 and ATP6AP2.

It is found in the membrane. Proton-conducting pore forming subunit of the V0 complex of vacuolar(H+)-ATPase (V-ATPase), a multisubunit enzyme composed of a peripheral complex (V1) that hydrolyzes ATP and a membrane integral complex (V0) that translocates protons. V-ATPase is responsible for acidifying and maintaining the pH of intracellular compartments and in some cell types, is targeted to the plasma membrane, where it is responsible for acidifying the extracellular environment. In Aedes aegypti (Yellowfever mosquito), this protein is V-type proton ATPase 16 kDa proteolipid subunit c.